We begin with the raw amino-acid sequence, 315 residues long: Glycine--tRNA ligase alpha subunit (315 aa).

Belongs to the class-II aminoacyl-tRNA synthetase family. As to quaternary structure, tetramer of two alpha and two beta subunits.

The protein localises to the cytoplasm. The enzyme catalyses tRNA(Gly) + glycine + ATP = glycyl-tRNA(Gly) + AMP + diphosphate. In Pseudomonas entomophila (strain L48), this protein is Glycine--tRNA ligase alpha subunit.